Reading from the N-terminus, the 121-residue chain is SPbeta prophage-derived uncharacterized protein YorW (121 aa).

This chain is SPbeta prophage-derived uncharacterized protein YorW (yorW), found in Bacillus subtilis (strain 168).